A 491-amino-acid chain; its full sequence is UDP-N-acetylmuramate--L-alanine ligase (491 aa).

126–132 (GTHGKTT) provides a ligand contact to ATP.

This sequence belongs to the MurCDEF family.

The protein resides in the cytoplasm. The enzyme catalyses UDP-N-acetyl-alpha-D-muramate + L-alanine + ATP = UDP-N-acetyl-alpha-D-muramoyl-L-alanine + ADP + phosphate + H(+). The protein operates within cell wall biogenesis; peptidoglycan biosynthesis. Cell wall formation. The sequence is that of UDP-N-acetylmuramate--L-alanine ligase from Salmonella paratyphi A (strain ATCC 9150 / SARB42).